Here is a 736-residue protein sequence, read N- to C-terminus: Gingipain R2 (736 aa).

The first 24 residues, 1-24 (MKKNFSRIVSIVAFSSLLGGMAFA), serve as a signal peptide directing secretion. A propeptide spanning residues 25–229 (QPAERGRNPQ…SVFMNYEATR (205 aa)) is cleaved from the precursor. Ca(2+) is bound by residues Asp307, Val329, Asp332, Tyr334, Glu336, Glu390, and His395. His440 functions as the Proton donor in the catalytic mechanism. Cys473 (nucleophile) is an active-site residue. 8 residues coordinate Ca(2+): Phe478, Glu487, Asp521, Glu522, Glu525, His531, Asp613, and Glu639.

Belongs to the peptidase C25 family.

It localises to the secreted. It carries out the reaction Hydrolysis of proteins and small molecule substrates, with a preference for Arg in P1.. Functionally, thiol protease. Acts synergistically with RgpA to catalyze the maturation of fimbrial subunits, such as FimA. Its proteolytic activity is a major factor in both periodontal tissue destruction and in evasion of host defense mechanisms. This chain is Gingipain R2, found in Porphyromonas gingivalis (strain ATCC 33277 / DSM 20709 / CIP 103683 / JCM 12257 / NCTC 11834 / 2561).